A 164-amino-acid chain; its full sequence is Endoribonuclease YbeY (164 aa).

Residues H111, H115, and H121 each contribute to the Zn(2+) site. The interval 142–164 (GYPDPYADDETETSPTVTTKDSE) is disordered. Residues 154–164 (TSPTVTTKDSE) are compositionally biased toward polar residues.

Belongs to the endoribonuclease YbeY family. Requires Zn(2+) as cofactor.

It is found in the cytoplasm. Its function is as follows. Single strand-specific metallo-endoribonuclease involved in late-stage 70S ribosome quality control and in maturation of the 3' terminus of the 16S rRNA. This Pseudomonas fluorescens (strain Pf0-1) protein is Endoribonuclease YbeY.